Reading from the N-terminus, the 188-residue chain is dCTP deaminase (188 aa).

DCTP contacts are provided by residues 111-116, 135-137, Gln-156, Tyr-170, and Gln-180; these read KSTYAR and TLE. The active-site Proton donor/acceptor is the Glu-137.

Belongs to the dCTP deaminase family. As to quaternary structure, homotrimer.

It carries out the reaction dCTP + H2O + H(+) = dUTP + NH4(+). Its pathway is pyrimidine metabolism; dUMP biosynthesis; dUMP from dCTP (dUTP route): step 1/2. Its function is as follows. Catalyzes the deamination of dCTP to dUTP. The chain is dCTP deaminase from Janthinobacterium sp. (strain Marseille) (Minibacterium massiliensis).